The chain runs to 362 residues: Protein-glutamate methylesterase/protein-glutamine glutaminase 5 (362 aa).

A Response regulatory domain is found at 13–130 (RVLVVDDSAL…RRFLEESRVR (118 aa)). Aspartate 64 carries the 4-aspartylphosphate modification. Positions 172–362 (LQTTERVVVV…IPPELLRLCR (191 aa)) constitute a CheB-type methylesterase domain. Active-site residues include serine 184, histidine 210, and aspartate 306.

It belongs to the CheB family. Post-translationally, phosphorylated by CheA. Phosphorylation of the N-terminal regulatory domain activates the methylesterase activity.

It is found in the cytoplasm. The catalysed reaction is [protein]-L-glutamate 5-O-methyl ester + H2O = L-glutamyl-[protein] + methanol + H(+). The enzyme catalyses L-glutaminyl-[protein] + H2O = L-glutamyl-[protein] + NH4(+). In terms of biological role, involved in chemotaxis. Part of a chemotaxis signal transduction system that modulates chemotaxis in response to various stimuli. Catalyzes the demethylation of specific methylglutamate residues introduced into the chemoreceptors (methyl-accepting chemotaxis proteins or MCP) by CheR. Also mediates the irreversible deamidation of specific glutamine residues to glutamic acid. This is Protein-glutamate methylesterase/protein-glutamine glutaminase 5 from Anaeromyxobacter dehalogenans (strain 2CP-C).